The chain runs to 640 residues: Protection of telomeres protein 1 (640 aa).

This sequence belongs to the telombin family. In terms of assembly, homodimer or homooligomer. Component of the shelterin complex (telosome) composed of TERF1, TERF2, TINF2, TERF2IP, ACD and POT1. Binds single-stranded telomeric DNA as a monomer. Associated component of the telomerase holoenzyme complex. Found in a complex with TERF1, TINF2 and TNKS1. Interacts with TNKS1. Forms heterodimers with ACD. Identified in a complex with ACD and single-stranded telomeric DNA.

The protein localises to the nucleus. Its subcellular location is the chromosome. The protein resides in the telomere. In terms of biological role, component of the telomerase ribonucleoprotein (RNP) complex that is essential for the replication of chromosome termini. Is a component of the double-stranded telomeric DNA-binding TRF1 complex which is involved in the regulation of telomere length by cis-inhibition of telomerase. Also acts as a single-stranded telomeric DNA-binding protein and thus may act as a downstream effector of the TRF1 complex and may transduce information about telomere maintenance and/or length to the telomere terminus. Component of the shelterin complex (telosome) that is involved in the regulation of telomere length and protection. Shelterin associates with arrays of double-stranded TTAGGG repeats added by telomerase and protects chromosome ends; without its protective activity, telomeres are no longer hidden from the DNA damage surveillance and chromosome ends are inappropriately processed by DNA repair pathways. Binds to two or more telomeric single-stranded 5'-TTAGGG-3' repeats (G-strand) and with high specificity to a minimal telomeric single-stranded 5'-TAGGGTTAG-3' sequence. Binds telomeric single-stranded sequences internally or at proximity of a 3'-end. Its activity is TERT dependent but it does not increase TERT activity. The protein is Protection of telomeres protein 1 (Pot1) of Mus musculus (Mouse).